Reading from the N-terminus, the 442-residue chain is 26S proteasome non-ATPase regulatory subunit 12 homolog A (442 aa).

Positions 6–137 (KLEATIDRLL…EAADLMQEVA (132 aa)) form a coiled coil. Residues 232 to 403 (EICRSYKAIY…GIVCFQIAKD (172 aa)) enclose the PCI domain.

This sequence belongs to the proteasome subunit p55 family. In terms of assembly, component of the 19S regulatory particle (RP/PA700) lid subcomplex of the 26S proteasome. The 26S proteasome is composed of a core protease (CP), known as the 20S proteasome, capped at one or both ends by the 19S regulatory particle (RP/PA700). The RP/PA700 complex is composed of at least 17 different subunits in two subcomplexes, the base and the lid, which form the portions proximal and distal to the 20S proteolytic core, respectively. Ubiquitous with highest expression in flowers.

It is found in the cytoplasm. The protein resides in the nucleus. Its function is as follows. Acts as a regulatory subunit of the 26 proteasome which is involved in the ATP-dependent degradation of ubiquitinated proteins. Required for gametogenesis and sporophyte development. Acts redundantly with RPN5B. The chain is 26S proteasome non-ATPase regulatory subunit 12 homolog A (RPN5A) from Arabidopsis thaliana (Mouse-ear cress).